The primary structure comprises 712 residues: Ribosomal RNA large subunit methyltransferase K/L (712 aa).

The THUMP domain occupies 46-157 (GAYQALLHSR…RENMVVSLDL (112 aa)).

Belongs to the methyltransferase superfamily. RlmKL family.

The protein localises to the cytoplasm. The enzyme catalyses guanosine(2445) in 23S rRNA + S-adenosyl-L-methionine = N(2)-methylguanosine(2445) in 23S rRNA + S-adenosyl-L-homocysteine + H(+). The catalysed reaction is guanosine(2069) in 23S rRNA + S-adenosyl-L-methionine = N(2)-methylguanosine(2069) in 23S rRNA + S-adenosyl-L-homocysteine + H(+). Its function is as follows. Specifically methylates the guanine in position 2445 (m2G2445) and the guanine in position 2069 (m7G2069) of 23S rRNA. In Actinobacillus pleuropneumoniae serotype 3 (strain JL03), this protein is Ribosomal RNA large subunit methyltransferase K/L.